The following is a 231-amino-acid chain: Probable methylthioribulose-1-phosphate dehydratase (231 aa).

C82 contacts substrate. Residues H100 and H102 each coordinate Zn(2+). The active-site Proton donor/acceptor is E123. Residue H181 participates in Zn(2+) binding.

Belongs to the aldolase class II family. MtnB subfamily. Requires Zn(2+) as cofactor.

Its subcellular location is the cytoplasm. It carries out the reaction 5-(methylsulfanyl)-D-ribulose 1-phosphate = 5-methylsulfanyl-2,3-dioxopentyl phosphate + H2O. Its pathway is amino-acid biosynthesis; L-methionine biosynthesis via salvage pathway; L-methionine from S-methyl-5-thio-alpha-D-ribose 1-phosphate: step 2/6. In terms of biological role, catalyzes the dehydration of methylthioribulose-1-phosphate (MTRu-1-P) into 2,3-diketo-5-methylthiopentyl-1-phosphate (DK-MTP-1-P). The sequence is that of Probable methylthioribulose-1-phosphate dehydratase from Dictyostelium discoideum (Social amoeba).